Consider the following 701-residue polypeptide: Nucleolar transcription factor 1-B (701 aa).

Positions 1 to 21 (MNGAAGGDTQGKMTAPKDQDQ) are disordered. 5 consecutive DNA-binding regions (HMG box) follow at residues 112–180 (PKKP…AKFR), 196–264 (PEKP…REYM), 298–362 (TKPP…MRFL), 422–489 (PETP…SDMR), and 508–574 (KKAP…DTWM). Positions 382-426 (MKRKRTNTPASKMATEDAAKVKSRSGQADKKKAAEERAKLPETPK) are disordered. The span at 408–426 (QADKKKAAEERAKLPETPK) shows a compositional bias: basic and acidic residues. Residues 584-701 (AYKEQNTNKR…SADSSDSDSN (118 aa)) are disordered. Positions 597–612 (TKIQAPSSKSKLVIQS) are enriched in polar residues. Acidic residues predominate over residues 615-682 (DDDEDDEDDE…DNEEDDDDNE (68 aa)). A compositionally biased stretch (low complexity) spans 683 to 695 (SGSSSSSSSSADS).

In terms of assembly, XUBF consists of 2 polypeptides of 82 and 85 kDa, encoded by the same or closely related genes.

It localises to the nucleus. Its function is as follows. UBF recognizes the ribosomal RNA gene promotor and activates transcription mediated by RNA polymerase I through cooperative interactions with the species-specific factor SL1. It binds specifically to the upstream control element. In Xenopus laevis (African clawed frog), this protein is Nucleolar transcription factor 1-B (ubtf-b).